A 665-amino-acid polypeptide reads, in one-letter code: Glycine--tRNA ligase beta subunit (665 aa).

Belongs to the class-II aminoacyl-tRNA synthetase family. As to quaternary structure, tetramer of two alpha and two beta subunits.

It localises to the cytoplasm. It carries out the reaction tRNA(Gly) + glycine + ATP = glycyl-tRNA(Gly) + AMP + diphosphate. In Rickettsia prowazekii (strain Madrid E), this protein is Glycine--tRNA ligase beta subunit (glyS).